Here is a 391-residue protein sequence, read N- to C-terminus: E1B 55 kDa protein (391 aa).

Phosphoserine is present on Ser-387.

It belongs to the adenoviridae E1B 55 kDa protein family. As to quaternary structure, interacts with host PML-4 and PML-5; this interaction promotes efficient subnuclear targeting of E1B-55K to PML nuclear bodies. Interacts with E4-ORF3 protein. Interacts with E4-ORF6 protein.

It is found in the host nucleus. The protein resides in the host cytoplasm. Plays a major role to prevent cellular inhibition of viral genome replication. Assembles an SCF-like E3 ubiquitin ligase complex based on the cellular proteins ELOB, ELOC, CUL5 and RBX1, in cooperation with viral E4orf6. This viral RING-type ligase ubiquitinates cellular substrates and targets them to proteasomal degradation: TP53/p53, LIG4, MRE11-RAD50-NBS1 (MRN) complex, ITGA3, DAXX and BLM. E1B-55K probably acts as the substrate-specific adapter of the SCF-like E3 ubiquitin ligase complex. Degradation of host TP53/p53 activity is essential for preventing E1A-induced TP53 accumulation that would otherwise lead to cell apoptosis and growth arrest. E1B-55K also inactivates TP53 transcription-factor activity by binding its transactivation domain. E1B-55K also functions as a SUMO1 E3 ligase for TP53 which causes the latter to be sequestered in promyelocytic leukemia (PML) nuclear bodies thereby contributing to maximal inhibition of TP53 function. The protein is E1B 55 kDa protein of Tree shrew adenovirus serotype 1 (TSAdV-1).